The sequence spans 31 residues: Cytochrome b6-f complex subunit 6 (31 aa).

Residues 4–24 (IISYFLFLIGALTLALVLFIG) traverse the membrane as a helical segment.

It belongs to the PetL family. As to quaternary structure, the 4 large subunits of the cytochrome b6-f complex are cytochrome b6, subunit IV (17 kDa polypeptide, PetD), cytochrome f and the Rieske protein, while the 4 small subunits are PetG, PetL, PetM and PetN. The complex functions as a dimer.

The protein localises to the plastid. It is found in the chloroplast thylakoid membrane. Its function is as follows. Component of the cytochrome b6-f complex, which mediates electron transfer between photosystem II (PSII) and photosystem I (PSI), cyclic electron flow around PSI, and state transitions. PetL is important for photoautotrophic growth as well as for electron transfer efficiency and stability of the cytochrome b6-f complex. This is Cytochrome b6-f complex subunit 6 from Marchantia polymorpha (Common liverwort).